The sequence spans 323 residues: Beta-ketoacyl-[acyl-carrier-protein] synthase III (323 aa).

Catalysis depends on residues cysteine 112 and histidine 250. An ACP-binding region spans residues 251–255 (QANYR). The active site involves asparagine 280.

It belongs to the thiolase-like superfamily. FabH family. As to quaternary structure, homodimer.

Its subcellular location is the cytoplasm. The catalysed reaction is malonyl-[ACP] + acetyl-CoA + H(+) = 3-oxobutanoyl-[ACP] + CO2 + CoA. It participates in lipid metabolism; fatty acid biosynthesis. In terms of biological role, catalyzes the condensation reaction of fatty acid synthesis by the addition to an acyl acceptor of two carbons from malonyl-ACP. Catalyzes the first condensation reaction which initiates fatty acid synthesis and may therefore play a role in governing the total rate of fatty acid production. Possesses both acetoacetyl-ACP synthase and acetyl transacylase activities. Its substrate specificity determines the biosynthesis of branched-chain and/or straight-chain of fatty acids. In Clostridium beijerinckii (strain ATCC 51743 / NCIMB 8052) (Clostridium acetobutylicum), this protein is Beta-ketoacyl-[acyl-carrier-protein] synthase III.